Reading from the N-terminus, the 273-residue chain is Octanoyltransferase LipM (273 aa).

The BPL/LPL catalytic domain occupies 33-244; it reads GKTPPTLRFY…AFTRLYAVEF (212 aa). Residue Cys146 is the Acyl-thioester intermediate of the active site.

The protein belongs to the octanoyltransferase LipM family. As to quaternary structure, monomer.

It carries out the reaction octanoyl-[ACP] + L-lysyl-[protein] = N(6)-octanoyl-L-lysyl-[protein] + holo-[ACP] + H(+). It functions in the pathway protein modification; protein lipoylation via endogenous pathway; protein N(6)-(lipoyl)lysine from octanoyl-[acyl-carrier-protein]. In terms of biological role, catalyzes the transfer of endogenously produced octanoic acid from octanoyl-acyl-carrier-protein onto the lipoyl domain of GcvH, an intermediate carrier during protein lipoylation. The sequence is that of Octanoyltransferase LipM from Moorella thermoacetica (strain ATCC 39073 / JCM 9320).